Consider the following 431-residue polypeptide: SH2 domain-containing protein 4B (431 aa).

Residues 201–235 (QASENEEREWEEQLRRSKAADEERSRRAQRARDEY) form a disordered region. Basic and acidic residues predominate over residues 211–235 (EEQLRRSKAADEERSRRAQRARDEY). The region spanning 325–417 (WFHGIISRES…SGGELLQEPC (93 aa)) is the SH2 domain.

This Mus musculus (Mouse) protein is SH2 domain-containing protein 4B (Sh2d4b).